The primary structure comprises 403 residues: Double C2-like domain-containing protein alpha (403 aa).

The tract at residues 1-92 is interaction with UNC13D and DYNLT1; sequence MRGRRGDRMT…DSYDSDDTTA (92 aa). C2 domains lie at 92–214 and 254–387; these read ALGT…HFNI and ERGR…ERWH. 9 residues coordinate Ca(2+): aspartate 123, aspartate 129, aspartate 184, aspartate 186, aspartate 285, aspartate 291, aspartate 345, aspartate 347, and aspartate 353. The interaction with UNC13D stretch occupies residues 218 to 403; that stretch reads RQVPLPSPSS…PPAAGALPLA (186 aa).

Interacts (via N-terminus) with UNC13A. Interacts with cytoplasmic dynein light chain DYNLT1. Interacts with UNC13D. Ca(2+) is required as a cofactor. Predominantly expressed in brain. Also found in non-neural tissues. Expressed in RBL-2H3 mast cell line.

Its subcellular location is the cytoplasmic vesicle. It is found in the secretory vesicle. The protein resides in the synaptic vesicle membrane. It localises to the synapse. The protein localises to the synaptosome. Its subcellular location is the lysosome. Functionally, calcium sensor which most probably regulates fusion of vesicles with membranes. Binds calcium and phospholipids. May be involved in calcium dependent neurotransmitter release through the interaction with UNC13A. May be involved in calcium-dependent spontaneous release of neurotransmitter in absence of action potentials in neuronal cells. Regulates Ca(2+)-dependent secretory lysosome exocytosis in mast cells. This Rattus norvegicus (Rat) protein is Double C2-like domain-containing protein alpha (Doc2a).